The primary structure comprises 270 residues: Lipopolysaccharide core biosynthesis glycosyltransferase LpsC (270 aa).

It belongs to the glycosyltransferase 2 family. WaaE/KdtX subfamily.

Its pathway is bacterial outer membrane biogenesis; LPS core biosynthesis. The sequence is that of Lipopolysaccharide core biosynthesis glycosyltransferase LpsC (lpsC) from Rhizobium meliloti (strain 1021) (Ensifer meliloti).